We begin with the raw amino-acid sequence, 172 residues long: Nucleoside-triphosphatase THEP1 (172 aa).

ATP-binding positions include 11-18 and 101-108; these read GKPGIGKT and IILIDEIG.

The protein belongs to the THEP1 NTPase family.

It carries out the reaction a ribonucleoside 5'-triphosphate + H2O = a ribonucleoside 5'-diphosphate + phosphate + H(+). Its function is as follows. Has nucleotide phosphatase activity towards ATP, GTP, CTP, TTP and UTP. May hydrolyze nucleoside diphosphates with lower efficiency. In Sulfolobus acidocaldarius (strain ATCC 33909 / DSM 639 / JCM 8929 / NBRC 15157 / NCIMB 11770), this protein is Nucleoside-triphosphatase THEP1.